The primary structure comprises 409 residues: Peptidase T (409 aa).

Zn(2+) is bound at residue His78. Residue Asp80 is part of the active site. Zn(2+) is bound at residue Asp140. Residue Glu173 is the Proton acceptor of the active site. Zn(2+) is bound by residues Glu174, Asp196, and His379.

It belongs to the peptidase M20B family. Requires Zn(2+) as cofactor.

The protein localises to the cytoplasm. It carries out the reaction Release of the N-terminal residue from a tripeptide.. In terms of biological role, cleaves the N-terminal amino acid of tripeptides. This Salmonella paratyphi C (strain RKS4594) protein is Peptidase T.